A 375-amino-acid polypeptide reads, in one-letter code: Succinyl-diaminopimelate desuccinylase (375 aa).

Zn(2+) is bound at residue His-66. The active site involves Asp-68. Asp-99 lines the Zn(2+) pocket. Catalysis depends on Glu-133, which acts as the Proton acceptor. The Zn(2+) site is built by Glu-134, Glu-162, and His-348.

It belongs to the peptidase M20A family. DapE subfamily. Homodimer. It depends on Zn(2+) as a cofactor. Requires Co(2+) as cofactor.

It catalyses the reaction N-succinyl-(2S,6S)-2,6-diaminopimelate + H2O = (2S,6S)-2,6-diaminopimelate + succinate. It functions in the pathway amino-acid biosynthesis; L-lysine biosynthesis via DAP pathway; LL-2,6-diaminopimelate from (S)-tetrahydrodipicolinate (succinylase route): step 3/3. Its function is as follows. Catalyzes the hydrolysis of N-succinyl-L,L-diaminopimelic acid (SDAP), forming succinate and LL-2,6-diaminopimelate (DAP), an intermediate involved in the bacterial biosynthesis of lysine and meso-diaminopimelic acid, an essential component of bacterial cell walls. The sequence is that of Succinyl-diaminopimelate desuccinylase from Citrobacter koseri (strain ATCC BAA-895 / CDC 4225-83 / SGSC4696).